The following is an 83-amino-acid chain: MPNIKSAIKRVRTTENAEARNISQKNAMRTAVKNAKTAINNNADNKAELVNFAIKSVDKASQSNLIHSNKADRIKSQLMSSSK.

The protein belongs to the bacterial ribosomal protein bS20 family.

Functionally, binds directly to 16S ribosomal RNA. The protein is Small ribosomal subunit protein bS20 of Staphylococcus haemolyticus (strain JCSC1435).